Reading from the N-terminus, the 126-residue chain is Protein ApaG (126 aa).

The ApaG domain occupies D2 to N126.

This chain is Protein ApaG, found in Vibrio vulnificus (strain CMCP6).